Consider the following 225-residue polypeptide: NAD(P)H-quinone oxidoreductase subunit K, chloroplastic (225 aa).

Residues Cys-43, Cys-44, Cys-108, and Cys-139 each coordinate [4Fe-4S] cluster.

Belongs to the complex I 20 kDa subunit family. As to quaternary structure, NDH is composed of at least 16 different subunits, 5 of which are encoded in the nucleus. It depends on [4Fe-4S] cluster as a cofactor.

It is found in the plastid. The protein resides in the chloroplast thylakoid membrane. It carries out the reaction a plastoquinone + NADH + (n+1) H(+)(in) = a plastoquinol + NAD(+) + n H(+)(out). It catalyses the reaction a plastoquinone + NADPH + (n+1) H(+)(in) = a plastoquinol + NADP(+) + n H(+)(out). Functionally, NDH shuttles electrons from NAD(P)H:plastoquinone, via FMN and iron-sulfur (Fe-S) centers, to quinones in the photosynthetic chain and possibly in a chloroplast respiratory chain. The immediate electron acceptor for the enzyme in this species is believed to be plastoquinone. Couples the redox reaction to proton translocation, and thus conserves the redox energy in a proton gradient. This is NAD(P)H-quinone oxidoreductase subunit K, chloroplastic from Nicotiana tabacum (Common tobacco).